The chain runs to 273 residues: Homeobox protein HMX2 (273 aa).

The interval 1-152 (MGSKEDAGKG…RQAGAAKKKT (152 aa)) is disordered. A compositionally biased stretch (gly residues) spans 93-102 (KGSGGSGPGG). The segment covering 114–123 (SDFKEEKERL) has biased composition (basic and acidic residues). Residues 149–208 (KKKTRTVFSRSQVYQLESTFDMKRYLSSSERACLASSLQLTETQVKTWFQNRRNKWKRQL) constitute a DNA-binding region (homeobox).

This sequence belongs to the HMX homeobox family.

It is found in the nucleus. Its function is as follows. Transcription factor involved in specification of neuronal cell types and which is required for inner ear and hypothalamus development. The protein is Homeobox protein HMX2 (HMX2) of Homo sapiens (Human).